A 376-amino-acid polypeptide reads, in one-letter code: tRNA-specific 2-thiouridylase MnmA (376 aa).

Residues 19–26 (GMSGGVDS) and Met45 contribute to the ATP site. The interval 105–107 (NPD) is interaction with target base in tRNA. Cys110 functions as the Nucleophile in the catalytic mechanism. Cysteines 110 and 210 form a disulfide. Residue Gly134 coordinates ATP. Positions 160-162 (KDQ) are interaction with tRNA. Catalysis depends on Cys210, which acts as the Cysteine persulfide intermediate. Residues 326 to 327 (RY) form an interaction with tRNA region.

The protein belongs to the MnmA/TRMU family.

It localises to the cytoplasm. It carries out the reaction S-sulfanyl-L-cysteinyl-[protein] + uridine(34) in tRNA + AH2 + ATP = 2-thiouridine(34) in tRNA + L-cysteinyl-[protein] + A + AMP + diphosphate + H(+). In terms of biological role, catalyzes the 2-thiolation of uridine at the wobble position (U34) of tRNA, leading to the formation of s(2)U34. This Bordetella petrii (strain ATCC BAA-461 / DSM 12804 / CCUG 43448) protein is tRNA-specific 2-thiouridylase MnmA.